A 751-amino-acid chain; its full sequence is Ribosome biogenesis protein ERB1 (751 aa).

Disordered regions lie at residues 1 to 140 (MALT…GNVP) and 289 to 336 (SEPS…DPED). Composition is skewed to acidic residues over residues 34–92 (LTDE…SDSD) and 119–129 (IEPDYDSDSST). Over residues 294-305 (SQPPPLPAPKRP) the composition is skewed to pro residues. Residues 323–336 (EEEKQEWLKQDPED) are compositionally biased toward basic and acidic residues. WD repeat units lie at residues 410–449 (HPKG…EIRR), 536–580 (PSSG…APFK), 582–621 (IKGA…KTLQ), 622–661 (PGIR…KPYK), 665–704 (YHSR…DLMT), and 720–751 (TDGL…VWCS).

It belongs to the WD repeat BOP1/ERB1 family. As to quaternary structure, component of the NOP7 complex, composed of ERB1, NOP7 and YTM1. The complex is held together by ERB1, which interacts with NOP7 via its N-terminal domain and with YTM1 via a high-affinity interaction between the seven-bladed beta-propeller domains of the 2 proteins. The NOP7 complex associates with the 66S pre-ribosome.

It is found in the nucleus. The protein localises to the nucleolus. It localises to the nucleoplasm. Functionally, component of the NOP7 complex, which is required for maturation of the 25S and 5.8S ribosomal RNAs and formation of the 60S ribosome. The polypeptide is Ribosome biogenesis protein ERB1 (Coprinopsis cinerea (strain Okayama-7 / 130 / ATCC MYA-4618 / FGSC 9003) (Inky cap fungus)).